The sequence spans 351 residues: Dysbindin (351 aa).

Positions 106–179 (FLADLECLTA…AELDAEHAQK (74 aa)) form a coiled coil. Residues 291-325 (RHKLSSLSSTCTDSASQEASEGESPVVQSDEEEVQ) form a disordered region. Over residues 295–306 (SSLSSTCTDSAS) the composition is skewed to low complexity.

The protein belongs to the dysbindin family. Component of the biogenesis of lysosome-related organelles complex 1 (BLOC-1).

It is found in the cytoplasm. It localises to the cytoplasmic vesicle membrane. The protein resides in the cytoplasmic vesicle. The protein localises to the secretory vesicle. Its subcellular location is the synaptic vesicle membrane. It is found in the endosome membrane. It localises to the melanosome membrane. The protein resides in the nucleus. The protein localises to the postsynaptic density. Its subcellular location is the endoplasmic reticulum. Functionally, component of the BLOC-1 complex, a complex that is required for normal biogenesis of lysosome-related organelles (LRO), such as platelet dense granules and melanosomes. Plays a role in intracellular vesicle trafficking. Plays a role in synaptic vesicle trafficking and in neurotransmitter release. May be required for normal dopamine homeostasis in the cerebral cortex, hippocampus, and hypothalamus. Plays a role in the regulation of cell surface exposure of DRD2. Contributes to the regulation of dopamine signaling. May play a role in actin cytoskeleton reorganization and neurite outgrowth. This is Dysbindin (DTNBP1) from Gallus gallus (Chicken).